Consider the following 138-residue polypeptide: Gas vesicle protein A (138 aa).

The segment at 74-138 is disordered; that stretch reads EAGPRKDPGL…STSRKKEEQE (65 aa). Positions 116–129 are enriched in low complexity; the sequence is GSSSGSSSGSSSRS.

Belongs to the gas vesicle GvpA family. The gas vesicle shell is 2 nm thick and consists of a single layer of this protein. It forms helical ribs nearly perpendicular to the long axis of the vesicle.

The protein localises to the gas vesicle shell. Its function is as follows. Gas vesicles are hollow, gas filled proteinaceous nanostructures found in some microorganisms. During planktonic growth they allow positioning of the organism at a favorable depth for light or nutrient acquisition. GvpA forms the protein shell. It is not clear what function gas vesicles perform in soil bacteria. In Streptomyces sp. (strain CB03234), this protein is Gas vesicle protein A.